We begin with the raw amino-acid sequence, 229 residues long: MAEHRTKPSELDQGKCDADDNVKIICLGDSAVGKSKLMERFLMDGFQPQQLSTYALTLYKHTATVDGKTILVDFWDTAGQERFQSMHASYYHKAHACIMVFDVQRKVTYKNLSAWYTELREFRPEIPCLVVANKIDADINVTQKSFNFAKKFSLPLYFVSAADGTNVVKLFNDAIRLAVSYKQNSQDFMDEILQELENFNLEQEEEDVPDQEQSGSIETPSEEVASPHS.

GTP is bound by residues 28 to 35, 76 to 80, and 133 to 136; these read GDSAVGKS, DTAGQ, and NKID. The tract at residues 200-229 is disordered; sequence NLEQEEEDVPDQEQSGSIETPSEEVASPHS.

Belongs to the small GTPase superfamily. Rab family. As to quaternary structure, interacts with IFT27, IFT81, IFT172, ATP6V1E1, HK1, LDHC, MAPRE1 and HSPA2.

Its function is as follows. Plays an essential role in male fertility, sperm intra-flagellar transport, and tail assembly. Binds, in a GTP-regulated manner, to a specific set of effector proteins including key proteins involved in cilia development and function and delivers them into the growing sperm tail. This Pongo abelii (Sumatran orangutan) protein is Rab-like protein 2A (RABL2A).